The sequence spans 122 residues: Ribonuclease P protein component (122 aa).

It belongs to the RnpA family. As to quaternary structure, consists of a catalytic RNA component (M1 or rnpB) and a protein subunit.

The catalysed reaction is Endonucleolytic cleavage of RNA, removing 5'-extranucleotides from tRNA precursor.. Functionally, RNaseP catalyzes the removal of the 5'-leader sequence from pre-tRNA to produce the mature 5'-terminus. It can also cleave other RNA substrates such as 4.5S RNA. The protein component plays an auxiliary but essential role in vivo by binding to the 5'-leader sequence and broadening the substrate specificity of the ribozyme. This Roseiflexus castenholzii (strain DSM 13941 / HLO8) protein is Ribonuclease P protein component.